Reading from the N-terminus, the 273-residue chain is Pyrroline-5-carboxylate reductase (273 aa).

The protein belongs to the pyrroline-5-carboxylate reductase family.

The protein resides in the cytoplasm. It carries out the reaction L-proline + NADP(+) = (S)-1-pyrroline-5-carboxylate + NADPH + 2 H(+). The catalysed reaction is L-proline + NAD(+) = (S)-1-pyrroline-5-carboxylate + NADH + 2 H(+). The protein operates within amino-acid biosynthesis; L-proline biosynthesis; L-proline from L-glutamate 5-semialdehyde: step 1/1. Catalyzes the reduction of 1-pyrroline-5-carboxylate (PCA) to L-proline. This is Pyrroline-5-carboxylate reductase from Pseudomonas aeruginosa (strain ATCC 15692 / DSM 22644 / CIP 104116 / JCM 14847 / LMG 12228 / 1C / PRS 101 / PAO1).